Here is a 110-residue protein sequence, read N- to C-terminus: Large ribosomal subunit protein uL22 (110 aa).

This sequence belongs to the universal ribosomal protein uL22 family. Part of the 50S ribosomal subunit.

This protein binds specifically to 23S rRNA; its binding is stimulated by other ribosomal proteins, e.g. L4, L17, and L20. It is important during the early stages of 50S assembly. It makes multiple contacts with different domains of the 23S rRNA in the assembled 50S subunit and ribosome. Functionally, the globular domain of the protein is located near the polypeptide exit tunnel on the outside of the subunit, while an extended beta-hairpin is found that lines the wall of the exit tunnel in the center of the 70S ribosome. The chain is Large ribosomal subunit protein uL22 from Leptospira interrogans serogroup Icterohaemorrhagiae serovar copenhageni (strain Fiocruz L1-130).